The chain runs to 69 residues: Ubiquitin-ribosomal protein eL40 fusion protein (69 aa).

One can recognise a Ubiquitin-like domain in the interval 1-17; the sequence is NIQKESTLHLVLRLRGG. Lys4 is covalently cross-linked (Glycyl lysine isopeptide (Lys-Gly) (interchain with G-Cter in ubiquitin)). Gly17 participates in a covalent cross-link: Glycyl lysine isopeptide (Gly-Lys) (interchain with K-? in acceptor proteins). Position 39 is an N6,N6,N6-trimethyllysine (Lys39).

In the N-terminal section; belongs to the ubiquitin family. The protein in the C-terminal section; belongs to the eukaryotic ribosomal protein eL40 family. In terms of assembly, part of the 60S ribosomal subunit. Trimethylation of Lys-39 ('Lys-22' of the mature chain) by SMYD5 promotes translation elongation and protein synthesis.

The protein localises to the cytoplasm. The protein resides in the nucleus. In terms of biological role, exists either covalently attached to another protein, or free (unanchored). When covalently bound, it is conjugated to target proteins via an isopeptide bond either as a monomer (monoubiquitin), a polymer linked via different Lys residues of the ubiquitin (polyubiquitin chains) or a linear polymer linked via the initiator Met of the ubiquitin (linear polyubiquitin chains). Polyubiquitin chains, when attached to a target protein, have different functions depending on the Lys residue of the ubiquitin that is linked: Lys-6-linked may be involved in DNA repair; Lys-11-linked is involved in ERAD (endoplasmic reticulum-associated degradation) and in cell-cycle regulation; Lys-29-linked is involved in proteotoxic stress response and cell cycle; Lys-33-linked is involved in kinase modification; Lys-48-linked is involved in protein degradation via the proteasome; Lys-63-linked is involved in endocytosis, DNA-damage responses as well as in signaling processes leading to activation of the transcription factor NF-kappa-B. Linear polymer chains formed via attachment by the initiator Met lead to cell signaling. Ubiquitin is usually conjugated to Lys residues of target proteins, however, in rare cases, conjugation to Cys or Ser residues has been observed. When polyubiquitin is free (unanchored-polyubiquitin), it also has distinct roles, such as in activation of protein kinases, and in signaling. Component of the 60S subunit of the ribosome. The chain is Ubiquitin-ribosomal protein eL40 fusion protein (UBA52) from Gallus gallus (Chicken).